The chain runs to 432 residues: MPAIVLIGAQWGDEGKGKATDLLGGRVQWVVRYQGGNNAGHTVVLPTGENFALHLIPSGVLTPGVTNVIGNGVVVDPGVLLDELKGLEDRGVDTSRLLISADAHLLLPYHVAIDKVTERYMGNKKIGTTGRGIGPCYQDKIARIGIRVADVLDREVLTHKIEAALELKNQILVKIYNRKALDPHQVVECLLEQAEGFRHRIADTRLLLNTALEAGETVLLEGSQGTLLDVDHGTYPYVTSSNPTAGGAAVGSGIGPTRITAVLGILKAYTTRVGSGPFPTELFDENGEYLSKTGGEFGVTTGRRRRCGWFDAVIARYATRVNGITDFFLTKLDVLSSLETVPVCVGYRIDGARVNEMPMTQSDLHRAEPIYEELPGWWEDISAAREFDDLPAKARDYVLRLEELAGAHVSCIGVGPGREQAIVRRDILAARP.

Residues 12 to 18 (GDEGKGK) and 40 to 42 (GHT) each bind GTP. The Proton acceptor role is filled by Asp-13. Residues Asp-13 and Gly-40 each coordinate Mg(2+). IMP is bound by residues 13–16 (DEGK), 38–41 (NAGH), Thr-129, Arg-143, Gln-224, Thr-239, and Arg-303. His-41 functions as the Proton donor in the catalytic mechanism. 299 to 305 (VTTGRRR) contributes to the substrate binding site. GTP-binding positions include Arg-305, 331-333 (KLD), and 413-415 (GVG).

Belongs to the adenylosuccinate synthetase family. Homodimer. Requires Mg(2+) as cofactor.

It localises to the cytoplasm. It carries out the reaction IMP + L-aspartate + GTP = N(6)-(1,2-dicarboxyethyl)-AMP + GDP + phosphate + 2 H(+). It participates in purine metabolism; AMP biosynthesis via de novo pathway; AMP from IMP: step 1/2. Functionally, plays an important role in the de novo pathway of purine nucleotide biosynthesis. Catalyzes the first committed step in the biosynthesis of AMP from IMP. The polypeptide is Adenylosuccinate synthetase (Mycolicibacterium paratuberculosis (strain ATCC BAA-968 / K-10) (Mycobacterium paratuberculosis)).